A 95-amino-acid polypeptide reads, in one-letter code: Protein TusB (95 aa).

The protein belongs to the DsrH/TusB family. Heterohexamer, formed by a dimer of trimers. The hexameric TusBCD complex contains 2 copies each of TusB, TusC and TusD. The TusBCD complex interacts with TusE.

The protein resides in the cytoplasm. Functionally, part of a sulfur-relay system required for 2-thiolation of 5-methylaminomethyl-2-thiouridine (mnm(5)s(2)U) at tRNA wobble positions. The protein is Protein TusB of Enterobacter sp. (strain 638).